The following is a 59-amino-acid chain: Large ribosomal subunit protein uL30 (59 aa).

It belongs to the universal ribosomal protein uL30 family. As to quaternary structure, part of the 50S ribosomal subunit.

The polypeptide is Large ribosomal subunit protein uL30 (Staphylococcus haemolyticus (strain JCSC1435)).